Here is a 51-residue protein sequence, read N- to C-terminus: Mitochondrial import receptor subunit TOM5 homolog (51 aa).

The residue at position 1 (methionine 1) is an N-acetylmethionine. Lysine 10 is covalently cross-linked (Glycyl lysine isopeptide (Lys-Gly) (interchain with G-Cter in SUMO2)). A helical transmembrane segment spans residues serine 27–leucine 45.

The protein belongs to the Tom5 family. As to quaternary structure, forms part of the preprotein translocase complex of the outer mitochondrial membrane (TOM complex) which consists of at least 7 different proteins (TOMM5, TOMM6, TOMM7, TOMM20, TOMM22, TOMM40 and TOMM70).

Its subcellular location is the mitochondrion outer membrane. This chain is Mitochondrial import receptor subunit TOM5 homolog, found in Mus musculus (Mouse).